The sequence spans 454 residues: NADP-specific glutamate dehydrogenase 1 (454 aa).

Serine 2 carries the post-translational modification N-acetylserine. Residue lysine 110 is part of the active site. Residue 174 to 203 (GVLTGKGLNWGGSLIRPEATGYGLVYYTQA) coordinates NAD(+). Residues lysine 325, lysine 371, and lysine 433 each participate in a glycyl lysine isopeptide (Lys-Gly) (interchain with G-Cter in ubiquitin) cross-link.

This sequence belongs to the Glu/Leu/Phe/Val dehydrogenases family. As to quaternary structure, homohexamer.

It catalyses the reaction L-glutamate + NADP(+) + H2O = 2-oxoglutarate + NH4(+) + NADPH + H(+). Its function is as follows. Catalyzes the incorporation of an ammonium ion into alpha-ketoglutarate to form L-glutamate, the major route of assimilation of ammonia into an organic form in yeast. The protein is NADP-specific glutamate dehydrogenase 1 of Saccharomyces cerevisiae (strain ATCC 204508 / S288c) (Baker's yeast).